The chain runs to 132 residues: Interleukin-13 (132 aa).

Residues 1-18 (MALLLTAVIVLICFGGLT) form the signal peptide. N-linked (GlcNAc...) asparagine glycosylation is found at asparagine 38, asparagine 49, asparagine 57, and asparagine 75. Cystine bridges form between cysteine 48-cysteine 76 and cysteine 64-cysteine 90.

Belongs to the IL-4/IL-13 family. Interacts with IL13RA2.

The protein localises to the secreted. Cytokine that plays important roles in allergic inflammation and immune response to parasite infection. Synergizes with IL2 in regulating interferon-gamma synthesis. Stimulates B-cell proliferation, and activation of eosinophils, basophils, and mast cells. Plays an important role in controlling IL33 activity by modulating the production of transmembrane and soluble forms of interleukin-1 receptor-like 1/IL1RL1. Displays the capacity to antagonize Th1-driven proinflammatory immune response and downregulates synthesis of many proinflammatory cytokines including IL1, IL6, IL10, IL12 and TNF-alpha through a mechanism that partially involves suppression of NF-kappa-B. Also functions on nonhematopoietic cells, including endothelial cells where it induces vascular cell adhesion protein 1/VCAM1, which is important in the recruitment of eosinophils. Exerts its biological effects through its receptors which comprises the IL4R chain and the IL13RA1 chain, to activate JAK1 and TYK2, leading to the activation of STAT6. Aside from IL13RA1, another receptor IL13RA2 acts as a high affinity decoy for IL13 and mediates internalization and depletion of extracellular IL13. The sequence is that of Interleukin-13 (IL13) from Bos taurus (Bovine).